The following is a 312-amino-acid chain: Very-long-chain 3-oxoacyl-CoA reductase (312 aa).

3 helical membrane-spanning segments follow: residues 33-53 (VWGI…WAVV), 181-201 (GVIL…LTLY), and 274-294 (HAFM…NLLM). Residue 48-77 (GAWAVVTGATDGIGKAYAKELAKRGMKVAL) participates in NADP(+) binding. Ser-188 lines the substrate pocket. The active-site Proton acceptor is the Tyr-201.

Belongs to the short-chain dehydrogenases/reductases (SDR) family. 17-beta-HSD 3 subfamily. Brain.

It localises to the endoplasmic reticulum membrane. It catalyses the reaction a very-long-chain (3R)-3-hydroxyacyl-CoA + NADP(+) = a very-long-chain 3-oxoacyl-CoA + NADPH + H(+). The enzyme catalyses 17beta-estradiol + NAD(+) = estrone + NADH + H(+). The catalysed reaction is 17beta-estradiol + NADP(+) = estrone + NADPH + H(+). It carries out the reaction 3-oxooctadecanoyl-CoA + NADPH + H(+) = (3R)-hydroxyoctadecanoyl-CoA + NADP(+). It catalyses the reaction (7Z,10Z,13Z,16Z)-3-oxodocosatetraenoyl-CoA + NADPH + H(+) = (3R)-hydroxy-(7Z,10Z,13Z,16Z)-docosatetraenoyl-CoA + NADP(+). The enzyme catalyses 3-oxo-(7Z,10Z,13Z,16Z,19Z)-docosapentaenoyl-CoA + NADPH + H(+) = (3R)-hydroxy-(7Z,10Z,13Z,16Z,19Z)-docosapentaenoyl-CoA + NADP(+). The catalysed reaction is (8Z,11Z,14Z)-3-oxoeicosatrienoyl-CoA + NADPH + H(+) = (3R)-hydroxy-(8Z,11Z,14Z)-eicosatrienoyl-CoA + NADP(+). The protein operates within lipid metabolism; fatty acid biosynthesis. It participates in steroid biosynthesis; estrogen biosynthesis. Catalyzes the second of the four reactions of the long-chain fatty acids elongation cycle. This endoplasmic reticulum-bound enzymatic process, allows the addition of two carbons to the chain of long- and very long-chain fatty acids/VLCFAs per cycle. This enzyme has a 3-ketoacyl-CoA reductase activity, reducing 3-ketoacyl-CoA to 3-hydroxyacyl-CoA, within each cycle of fatty acid elongation. Thereby, it may participate in the production of VLCFAs of different chain lengths that are involved in multiple biological processes as precursors of membrane lipids and lipid mediators. May also catalyze the transformation of estrone (E1) into estradiol (E2) and play a role in estrogen formation. This chain is Very-long-chain 3-oxoacyl-CoA reductase (HSD17B12), found in Anas platyrhynchos (Mallard).